Reading from the N-terminus, the 197-residue chain is Xanthine phosphoribosyltransferase (197 aa).

2 residues coordinate xanthine: Leu-20 and Asn-27. 5-phospho-alpha-D-ribose 1-diphosphate is bound at residue 128-132 (ANGQA). Lys-156 is a xanthine binding site.

This sequence belongs to the purine/pyrimidine phosphoribosyltransferase family. Xpt subfamily. Homodimer.

It is found in the cytoplasm. The enzyme catalyses XMP + diphosphate = xanthine + 5-phospho-alpha-D-ribose 1-diphosphate. It participates in purine metabolism; XMP biosynthesis via salvage pathway; XMP from xanthine: step 1/1. Its function is as follows. Converts the preformed base xanthine, a product of nucleic acid breakdown, to xanthosine 5'-monophosphate (XMP), so it can be reused for RNA or DNA synthesis. The sequence is that of Xanthine phosphoribosyltransferase from Bacillus anthracis (strain A0248).